We begin with the raw amino-acid sequence, 258 residues long: MTEQPAQPKMTARSLAVHYGGKPALKGVDLDIVAGEVNALIGPSGCGKSTFLRCLNRMNDTIPAAKVSGQATLDGEDIYGPAGMDPVLLRARVGMVFQRPNPFPKSIYDNVAFGPRLHGLVAEGDEMDVLVRTSLERAGLWKEVKDVLGNLGTSLSGGQQQRLCIARAIAVSPEVILMDEPCSALDPIATARIEELIDELRDVFTIVMVTHSMQQAARVSQTTAFFHLGEIVEVGATEQIFTAPANSLTQGYITGRFG.

The ABC transporter domain maps to Met10–Ile253. Gly42–Ser49 is a binding site for ATP.

It belongs to the ABC transporter superfamily. Phosphate importer (TC 3.A.1.7) family. The complex is composed of two ATP-binding proteins (PstB), two transmembrane proteins (PstC and PstA) and a solute-binding protein (PstS).

Its subcellular location is the cell inner membrane. It catalyses the reaction phosphate(out) + ATP + H2O = ADP + 2 phosphate(in) + H(+). In terms of biological role, part of the ABC transporter complex PstSACB involved in phosphate import. Responsible for energy coupling to the transport system. The sequence is that of Phosphate import ATP-binding protein PstB 3 from Paramagnetospirillum magneticum (strain ATCC 700264 / AMB-1) (Magnetospirillum magneticum).